We begin with the raw amino-acid sequence, 249 residues long: Ribitol 2-dehydrogenase (249 aa).

20-43 (TGAASGIGLECARTLLGAGAKVVL) is a binding site for NAD(+). Tyrosine 160 acts as the Proton acceptor in catalysis.

Belongs to the short-chain dehydrogenases/reductases (SDR) family. In terms of assembly, homotetramer.

It carries out the reaction ribitol + NAD(+) = D-ribulose + NADH + H(+). The sequence is that of Ribitol 2-dehydrogenase (rbtD) from Klebsiella aerogenes (Enterobacter aerogenes).